The primary structure comprises 684 residues: Divalent metal transporter 1 (684 aa).

At 1 to 228 (MEKDFTERST…YRNKLSLYNK (228 aa)) the chain is on the cytoplasmic side. Residues 153-195 (NKRNNNNNNNNNNNNNNNNNNNNNNNNNNNNNNNNSNNVDNRK) are disordered. Over residues 156 to 191 (NNNNNNNNNNNNNNNNNNNNNNNNNNNNNNNNSNNV) the composition is skewed to low complexity. Residues 229-247 (LRMCFNYFGPGWIVAIAYL) traverse the membrane as a helical segment. The Vacuolar segment spans residues 248 to 275 (DPGNLCSNLNVGLIRSPDPTLEKDYSGY). A helical membrane pass occupies residues 276 to 299 (YLLWIMVYGHMLGFIFQVLSMRLG). Topologically, residues 300–319 (HVTGLDLASLCSKEFDRTTS) are cytoplasmic. Residues 320-345 (TIIYVLVQIAIWGAHIQAIIGTFIAL) traverse the membrane as a helical segment. Over 346–350 (NLIFG) the chain is Vacuolar. The chain crosses the membrane as a helical span at residues 351 to 370 (ISVKVAIFYTLFEAIIYSFL). Residues 371–381 (ENKSLGLLENV) lie on the Cytoplasmic side of the membrane. Residues 382–404 (LSFLVGILAVSFFVNVFMTPINF) form a helical membrane-spanning segment. Residues 405–423 (KELAISILYPRIPKGKEID) are Vacuolar-facing. Residues 424-445 (ALALLGSIISAHIFYLHTNLTA) traverse the membrane as a helical segment. Residues 446 to 465 (KKKSVICNDLSLRRYNTLGT) are Cytoplasmic-facing. The helical transmembrane segment at 466 to 487 (IESGGSLFLSCLTNCIIVLTFA) threads the bilayer. Residues 488–515 (EVNLKSFERRDQYNLFTAYEVMRKSFGK) are Vacuolar-facing. Residues 516 to 534 (ISMYIWSFGLLSSGNNSSF) form a helical membrane-spanning segment. Residues 535 to 554 (MCEYASKSVVEGFLNKKINT) lie on the Cytoplasmic side of the membrane. The helical transmembrane segment at 555–573 (FVRVFTFRLMLFSLLYMFL) threads the bilayer. The Vacuolar segment spans residues 574–584 (TLNKYTLDQLT). The helical transmembrane segment at 585–603 (NFINVIQVLLLPMATIPLY) threads the bilayer. Residues 604–622 (RFSIHENVLGEFRLKKFPK) are Cytoplasmic-facing. A helical transmembrane segment spans residues 623–645 (FAVFLIIIAIIISNVLLTFLDFV). Residues 646 to 650 (HKETS) are Vacuolar-facing. A helical transmembrane segment spans residues 651-673 (LITIFFLVIFSFLYFGFIIYFFN). Residues 674 to 684 (IPIKKNYIQRN) are Cytoplasmic-facing.

The protein belongs to the NRAMP (TC 2.A.55) family.

The protein resides in the vacuole membrane. It catalyses the reaction Fe(2+)(in) = Fe(2+)(out). Iron transporter. Required for parasite development during the blood stages. Required for apicoplast biogenesis. Required for mitochondrial polarization. The protein is Divalent metal transporter 1 of Plasmodium falciparum (isolate 3D7).